A 344-amino-acid chain; its full sequence is G-protein coupled receptor str-217 (344 aa).

At 1–10 the chain is on the extracellular side; the sequence is MLLFQKTLSR. The helical transmembrane segment at 11 to 31 threads the bilayer; that stretch reads VAAPISVAANLILILLIIFKS. Residues 32-39 are Cytoplasmic-facing; sequence PAQMGNYK. The chain crosses the membrane as a helical span at residues 40-60; the sequence is YLLIGLSIFEMSYAVLDVVSE. The Extracellular segment spans residues 61–88; that stretch reads TTVLSIKKSFVVVVPYKDRSFGQETAMD. A helical membrane pass occupies residues 89–109; that stretch reads INLIYCGFFGFSMGMFVVIFA. The Cytoplasmic segment spans residues 110-128; the sequence is YRSFLTTGNTILRKFEGFK. Residues 129–149 traverse the membrane as a helical segment; sequence IISWFAYPLFYAIVWILVAWG. The Extracellular portion of the chain corresponds to 150–195; sequence PLASFPEMDIVVRPFLLDELNMTVDEVAYTGRLFYSTIDNSLRYSA. Asn170 is a glycosylation site (N-linked (GlcNAc...) asparagine). A helical transmembrane segment spans residues 196-216; that stretch reads ILTGVLQWVLTASSLFLVIFF. Over 217–256 the chain is Cytoplasmic; it reads GLRCYFHYGKLVQLTDVQSIRLRQLQNQLFLALVCQATVP. A helical membrane pass occupies residues 257–277; that stretch reads LILMHIPVTILYTCCVLNIVF. Residues 278-279 lie on the Extracellular side of the membrane; sequence NP. The helical transmembrane segment at 280-300 threads the bilayer; sequence FSVATTIALFPAIDPLPTIFI. Over 301–344 the chain is Cytoplasmic; sequence VKNYRVALFEFVCPSCLCWSETLKHMGSNRITSYRSNTVNALSM.

The protein belongs to the nematode receptor-like protein str family. Expressed in the ADL chemosensory neurons.

The protein localises to the cell membrane. Its function is as follows. Probable G-protein coupled receptor. This Caenorhabditis elegans protein is G-protein coupled receptor str-217.